The sequence spans 463 residues: MDFSGLFLTLSAAALFLCLLRFIAGVRRSSSTKLPLPPGTMGYPYVGETFQLYSQDPNVFFAAKQRRYGSVFKTHVLGCPCVMISSPEAAKFVLVTKSHLFKPTFPASKERMLGKQAIFFHQGDYHSKLRKLVLRAFMPDAIRNMVPHIESIAQESLNSWDGTQLNTYQEMKTYTFNVALISILGKDEVYYREDLKRCYYILEKGYNSMPINLPGTLFHKAMKARKELAQILANILSKRRQNPSSHTDLLGSFMEDKAGLTDEQIADNIIGVIFAARDTTASVLTWILKYLADNPTVLEAVTEEQMAIRKDKKEGESLTWEDTKKMPLTYRVIQETLRAATILSFTFREAVEDVEYEGYLIPKGWKVLPLFRNIHHNADIFSDPGKFDPSRFEVAPKPNTFMPFGSGIHSCPGNELAKLEISVLIHHLTTKYRWSIVGPSDGIQYGPFALPQNGLPIALERKP.

A helical membrane pass occupies residues 6-26 (LFLTLSAAALFLCLLRFIAGV). Heme is bound at residue cysteine 411.

The protein belongs to the cytochrome P450 family. Heme serves as cofactor. As to expression, mainly expressed in flower buds, flowers, rosette leaves and roots. Lower expression in mature siliques and inflorescence stems. Not expressed in dry seeds.

It is found in the membrane. It carries out the reaction 2-cis-(+)-abscisate + reduced [NADPH--hemoprotein reductase] + O2 = (+)-8'-hydroxyabscisate + oxidized [NADPH--hemoprotein reductase] + H2O + H(+). The protein operates within plant hormone degradation; abscisic acid degradation. Inhibited by tetcyclcis, but not by metyrapone. Functionally, involved in the oxidative degradation of abscisic acid, but not in the isomerization of the produced 8'-hydroxyabscisic acid (8'-OH-ABA) to (-)-phaseic acid (PA). Involved in the control of postgermination growth. The sequence is that of Abscisic acid 8'-hydroxylase 3 (CYP707A3) from Arabidopsis thaliana (Mouse-ear cress).